Reading from the N-terminus, the 243-residue chain is Adenosylcobinamide-GDP ribazoletransferase (243 aa).

5 helical membrane passes run 31-51, 57-77, 109-129, 135-155, and 188-208; these read LLFY…LNIA, LLLH…ALHL, IAVV…LALI, MALI…FLTT, and LVIA…VFIW.

This sequence belongs to the CobS family. It depends on Mg(2+) as a cofactor.

It is found in the cell inner membrane. The enzyme catalyses alpha-ribazole + adenosylcob(III)inamide-GDP = adenosylcob(III)alamin + GMP + H(+). It carries out the reaction alpha-ribazole 5'-phosphate + adenosylcob(III)inamide-GDP = adenosylcob(III)alamin 5'-phosphate + GMP + H(+). It participates in cofactor biosynthesis; adenosylcobalamin biosynthesis; adenosylcobalamin from cob(II)yrinate a,c-diamide: step 7/7. Joins adenosylcobinamide-GDP and alpha-ribazole to generate adenosylcobalamin (Ado-cobalamin). Also synthesizes adenosylcobalamin 5'-phosphate from adenosylcobinamide-GDP and alpha-ribazole 5'-phosphate. The sequence is that of Adenosylcobinamide-GDP ribazoletransferase from Pseudomonas fluorescens (strain Pf0-1).